Consider the following 694-residue polypeptide: Polyribonucleotide nucleotidyltransferase (694 aa).

Residues Asp485 and Asp491 each contribute to the Mg(2+) site. Residues 552–611 (PRIETMQIKPNKIATVIGPGGKQIRQIIEEAGVQIDINDSGLVSISASSPQAIEKAKSMI) enclose the KH domain. The 69-residue stretch at 621-689 (GKIYEGRVTS…EKGQYKLSHK (69 aa)) folds into the S1 motif domain.

Belongs to the polyribonucleotide nucleotidyltransferase family. Requires Mg(2+) as cofactor.

The protein resides in the cytoplasm. It catalyses the reaction RNA(n+1) + phosphate = RNA(n) + a ribonucleoside 5'-diphosphate. Involved in mRNA degradation. Catalyzes the phosphorolysis of single-stranded polyribonucleotides processively in the 3'- to 5'-direction. The sequence is that of Polyribonucleotide nucleotidyltransferase from Chlamydia caviae (strain ATCC VR-813 / DSM 19441 / 03DC25 / GPIC) (Chlamydophila caviae).